The chain runs to 250 residues: Probable transcriptional regulatory protein Emin_1151 (250 aa).

This sequence belongs to the TACO1 family.

It localises to the cytoplasm. The polypeptide is Probable transcriptional regulatory protein Emin_1151 (Elusimicrobium minutum (strain Pei191)).